A 288-amino-acid polypeptide reads, in one-letter code: Undecaprenyl-diphosphatase (288 aa).

Helical transmembrane passes span 11-31, 49-69, 94-114, 129-149, 159-179, 199-219, 234-254, and 265-285; these read LDLWQAIVLGFVQGATEFLPI, PGVAFTAVIQLGSIVAVLSYF, AQMGLGILFGTIPILIGGLLI, LAAIAIVSIVMGLLLGIAEQL, LRLADGLWMGFAQALALIPGV, AARFSFLLGIPAITIAGLVEL, VLAIGTLSSLIFSWLAIAWLL, and FVVYRIIFGGVILTAIATGTL.

The protein belongs to the UppP family.

It localises to the cell inner membrane. It catalyses the reaction di-trans,octa-cis-undecaprenyl diphosphate + H2O = di-trans,octa-cis-undecaprenyl phosphate + phosphate + H(+). Catalyzes the dephosphorylation of undecaprenyl diphosphate (UPP). Confers resistance to bacitracin. This Synechococcus elongatus (strain ATCC 33912 / PCC 7942 / FACHB-805) (Anacystis nidulans R2) protein is Undecaprenyl-diphosphatase.